A 345-amino-acid chain; its full sequence is Protein sdf-9 (345 aa).

One can recognise a Tyrosine-protein phosphatase domain in the interval 33–284 (NRNRVVKIVP…SFIYEAVLDY (252 aa)).

This sequence belongs to the protein-tyrosine phosphatase family. Expressed in the 2 embryonic head hypodermal cells XXXL/R.

The protein localises to the cytoplasm. Its subcellular location is the cell membrane. Functionally, together with eak-4 and phosphatase eak-6, negatively regulates dauer larva formation downstream of insulin-like receptor daf-2 and in parallel of age-1, pdk-1 and akt-1. The polypeptide is Protein sdf-9 (Caenorhabditis elegans).